The following is a 38-amino-acid chain: Histidine decarboxylase small chain (38 aa).

As to quaternary structure, heterohexamer of 3 large and 3 small chains. Pyruvate serves as cofactor.

The enzyme catalyses L-histidine + H(+) = histamine + CO2. The chain is Histidine decarboxylase small chain from Micrococcus sp.